The following is a 202-amino-acid chain: Large ribosomal subunit protein eL13 (202 aa).

Residues 183–202 (GIREKRAKEKAEAEAEKAKK) form a disordered region.

Belongs to the eukaryotic ribosomal protein eL13 family. Component of the large ribosomal subunit. Mature ribosomes consist of a small (40S) and a large (60S) subunit. The 40S subunit contains about 32 different proteins and 1 molecule of RNA (18S). The 60S subunit contains 45 different proteins and 3 molecules of RNA (25S, 5.8S and 5S).

Its subcellular location is the cytoplasm. Its function is as follows. Component of the ribosome, a large ribonucleoprotein complex responsible for the synthesis of proteins in the cell. The small ribosomal subunit (SSU) binds messenger RNAs (mRNAs) and translates the encoded message by selecting cognate aminoacyl-transfer RNA (tRNA) molecules. The large subunit (LSU) contains the ribosomal catalytic site termed the peptidyl transferase center (PTC), which catalyzes the formation of peptide bonds, thereby polymerizing the amino acids delivered by tRNAs into a polypeptide chain. The nascent polypeptides leave the ribosome through a tunnel in the LSU and interact with protein factors that function in enzymatic processing, targeting, and the membrane insertion of nascent chains at the exit of the ribosomal tunnel. This is Large ribosomal subunit protein eL13 from Candida albicans (strain SC5314 / ATCC MYA-2876) (Yeast).